Here is a 49-residue protein sequence, read N- to C-terminus: Large ribosomal subunit protein bL33A (49 aa).

The protein belongs to the bacterial ribosomal protein bL33 family.

This is Large ribosomal subunit protein bL33A from Geobacillus kaustophilus (strain HTA426).